We begin with the raw amino-acid sequence, 484 residues long: Glutamate--tRNA ligase (484 aa).

The 'HIGH' region motif lies at 11–21 (PSPTGLLHIGN). The 'KMSKS' region signature appears at 255-259 (KLSKR). Lysine 258 provides a ligand contact to ATP.

This sequence belongs to the class-I aminoacyl-tRNA synthetase family. Glutamate--tRNA ligase type 1 subfamily. As to quaternary structure, monomer.

The protein localises to the cytoplasm. It catalyses the reaction tRNA(Glu) + L-glutamate + ATP = L-glutamyl-tRNA(Glu) + AMP + diphosphate. Functionally, catalyzes the attachment of glutamate to tRNA(Glu) in a two-step reaction: glutamate is first activated by ATP to form Glu-AMP and then transferred to the acceptor end of tRNA(Glu). The sequence is that of Glutamate--tRNA ligase from Streptococcus agalactiae serotype III (strain NEM316).